A 439-amino-acid polypeptide reads, in one-letter code: Probable eukaryotic translation initiation factor 5-1 (439 aa).

Residue Gly-29–Thr-36 coordinates GTP. The interval Leu-143 to Glu-245 is disordered. Positions Pro-147–Ser-186 are enriched in basic and acidic residues. Over residues Asp-214–Val-228 the composition is skewed to acidic residues. Thr-232 bears the Phosphothreonine mark. Positions Thr-234–Glu-245 are enriched in basic and acidic residues. A W2 domain is found at Lys-283 to Glu-439. Phosphoserine is present on residues Ser-434 and Ser-436.

Belongs to the eIF-2-beta/eIF-5 family.

Catalyzes the hydrolysis of GTP bound to the 40S ribosomal initiation complex (40S.mRNA.Met-tRNA[F].eIF-2.GTP) with the subsequent joining of a 60S ribosomal subunit resulting in the release of eIF-2 and the guanine nucleotide. The subsequent joining of a 60S ribosomal subunit results in the formation of a functional 80S initiation complex (80S.mRNA.Met-tRNA[F]). This chain is Probable eukaryotic translation initiation factor 5-1, found in Arabidopsis thaliana (Mouse-ear cress).